Here is a 365-residue protein sequence, read N- to C-terminus: Cobalt-precorrin-5B C(1)-methyltransferase (365 aa).

This sequence belongs to the CbiD family.

It carries out the reaction Co-precorrin-5B + S-adenosyl-L-methionine = Co-precorrin-6A + S-adenosyl-L-homocysteine. The protein operates within cofactor biosynthesis; adenosylcobalamin biosynthesis; cob(II)yrinate a,c-diamide from sirohydrochlorin (anaerobic route): step 6/10. Its function is as follows. Catalyzes the methylation of C-1 in cobalt-precorrin-5B to form cobalt-precorrin-6A. This is Cobalt-precorrin-5B C(1)-methyltransferase from Geobacillus sp. (strain WCH70).